The sequence spans 520 residues: Alpha-1B adrenergic receptor (520 aa).

The Extracellular portion of the chain corresponds to 1–45 (MNPDLDTGHNTSAPAHWGELKNANFTGPNQTSSNSTLPQLDITRA). Residues N10, N24, N29, and N34 are each glycosylated (N-linked (GlcNAc...) asparagine). The helical transmembrane segment at 46–70 (ISVGLVLGAFILFAIVGNILVILSV) threads the bilayer. At 71-83 (ACNRHLRTPTNYF) the chain is on the cytoplasmic side. Residues 84–105 (IVNLAMADLLLSFTVLPFSAAL) traverse the membrane as a helical segment. Residues 106–115 (EVLGYWVLGR) lie on the Extracellular side of the membrane. Residues 116–141 (IFCDIWAAVDVLCCTASILSLCAISI) form a helical membrane-spanning segment. A disulfide bridge links C118 with C195. Over 142–161 (DRYIGVRYSLQYPTLVTRRK) the chain is Cytoplasmic. Residues 162-184 (AILALLSVWVLSTVISIGPLLGW) traverse the membrane as a helical segment. Topologically, residues 185–201 (KEPAPNDDKECGVTEEP) are extracellular. Residues 202–224 (FYALFSSLGSFYIPLAVILVMYC) traverse the membrane as a helical segment. The Cytoplasmic portion of the chain corresponds to 225–295 (RVYIVAKRTT…FSREKKAAKT (71 aa)). Position 264 is a phosphothreonine (T264). Residues 296-319 (LGIVVGMFILCWLPFFIALPLGSL) form a helical membrane-spanning segment. The Extracellular portion of the chain corresponds to 320-326 (FSTLKPP). The chain crosses the membrane as a helical span at residues 327-351 (DAVFKVVFWLGYFNSCLNPIIYPCS). Residues 352-520 (SKEFKRAFVR…SNMPLAPGQF (169 aa)) lie on the Cytoplasmic side of the membrane. A lipid anchor (S-palmitoyl cysteine) is attached at C365. A Nuclear localization signal motif is present at residues 368-380 (RGRGRRRRRRRRR). 2 disordered regions span residues 394-432 (GGSL…GYLG) and 479-520 (LTEP…PGQF).

It belongs to the G-protein coupled receptor 1 family. Adrenergic receptor subfamily. ADRA1B sub-subfamily. Homo- and heterooligomer. Heterooligomerizes with ADRA1B homooligomers in cardiac myocytes. Interacts with CAVIN4.

It is found in the nucleus membrane. Its subcellular location is the cell membrane. The protein localises to the cytoplasm. The protein resides in the membrane. It localises to the caveola. In terms of biological role, this alpha-adrenergic receptor mediates its action by association with G proteins that activate a phosphatidylinositol-calcium second messenger system. Its effect is mediated by G(q) and G(11) proteins. Nuclear ADRA1A-ADRA1B heterooligomers regulate phenylephrine (PE)-stimulated ERK signaling in cardiac myocytes. In Homo sapiens (Human), this protein is Alpha-1B adrenergic receptor (ADRA1B).